We begin with the raw amino-acid sequence, 236 residues long: Phosphoribosylaminoimidazole-succinocarboxamide synthase (236 aa).

Belongs to the SAICAR synthetase family.

It carries out the reaction 5-amino-1-(5-phospho-D-ribosyl)imidazole-4-carboxylate + L-aspartate + ATP = (2S)-2-[5-amino-1-(5-phospho-beta-D-ribosyl)imidazole-4-carboxamido]succinate + ADP + phosphate + 2 H(+). Its pathway is purine metabolism; IMP biosynthesis via de novo pathway; 5-amino-1-(5-phospho-D-ribosyl)imidazole-4-carboxamide from 5-amino-1-(5-phospho-D-ribosyl)imidazole-4-carboxylate: step 1/2. This chain is Phosphoribosylaminoimidazole-succinocarboxamide synthase, found in Coprothermobacter proteolyticus (strain ATCC 35245 / DSM 5265 / OCM 4 / BT).